Consider the following 197-residue polypeptide: Ribonuclease HII (197 aa).

Residues 11-197 (HLIAGVDEVG…FAPVKKILGL (187 aa)) form the RNase H type-2 domain. Asp-17, Glu-18, and Asp-109 together coordinate a divalent metal cation.

It belongs to the RNase HII family. Requires Mn(2+) as cofactor. The cofactor is Mg(2+).

It localises to the cytoplasm. The catalysed reaction is Endonucleolytic cleavage to 5'-phosphomonoester.. Functionally, endonuclease that specifically degrades the RNA of RNA-DNA hybrids. This chain is Ribonuclease HII, found in Actinobacillus pleuropneumoniae serotype 5b (strain L20).